Reading from the N-terminus, the 157-residue chain is 2-C-methyl-D-erythritol 2,4-cyclodiphosphate synthase (157 aa).

A divalent metal cation contacts are provided by Asp8 and His10. Residues 8-10 (DVH) and 34-35 (HS) contribute to the 4-CDP-2-C-methyl-D-erythritol 2-phosphate site. Position 42 (His42) interacts with a divalent metal cation. 4-CDP-2-C-methyl-D-erythritol 2-phosphate contacts are provided by residues 56-58 (DIG), 61-65 (FPDTD), 100-106 (AQAPKMA), 132-135 (TTTE), Phe139, and Arg142.

The protein belongs to the IspF family. As to quaternary structure, homotrimer. It depends on a divalent metal cation as a cofactor.

The enzyme catalyses 4-CDP-2-C-methyl-D-erythritol 2-phosphate = 2-C-methyl-D-erythritol 2,4-cyclic diphosphate + CMP. Its pathway is isoprenoid biosynthesis; isopentenyl diphosphate biosynthesis via DXP pathway; isopentenyl diphosphate from 1-deoxy-D-xylulose 5-phosphate: step 4/6. Functionally, involved in the biosynthesis of isopentenyl diphosphate (IPP) and dimethylallyl diphosphate (DMAPP), two major building blocks of isoprenoid compounds. Catalyzes the conversion of 4-diphosphocytidyl-2-C-methyl-D-erythritol 2-phosphate (CDP-ME2P) to 2-C-methyl-D-erythritol 2,4-cyclodiphosphate (ME-CPP) with a corresponding release of cytidine 5-monophosphate (CMP). The polypeptide is 2-C-methyl-D-erythritol 2,4-cyclodiphosphate synthase (Azotobacter vinelandii (strain DJ / ATCC BAA-1303)).